The following is a 78-amino-acid chain: Esculentin-2ISa (78 aa).

Positions 1 to 22 (MFTLKKSLLLLFFLGTISLSVC) are cleaved as a signal peptide. Residues 23–39 (KQERDADYEDKGEVEEV) constitute a propeptide, removed in mature form. A disulfide bridge links Cys72 with Cys78.

As to expression, expressed by the skin glands.

It is found in the secreted. Has antimicrobial activity against Gram-negative bacterium E.coli ATCC 8739 (MIC=12.5 ug), against Gram positive bacteria S.aureus ATCC 6538 (MIC=3.1 ug), methicillin-resistant S.aureus ATCC 43300 (MIC=25 ug), B.subtilis ATCC 6633 (MIC=6.3 ug) and against fungus C.albicans ATCC 90028 (MIC=100 ug). The polypeptide is Esculentin-2ISa (Odorrana ishikawae (Ishikawa's frog)).